A 1317-amino-acid chain; its full sequence is DNA-directed RNA polymerase subunit beta' (1317 aa).

Residues cysteine 60, cysteine 62, cysteine 75, and cysteine 78 each coordinate Zn(2+). 3 residues coordinate Mg(2+): aspartate 535, aspartate 537, and aspartate 539. Zn(2+) is bound by residues cysteine 890, cysteine 967, cysteine 974, and cysteine 977.

It belongs to the RNA polymerase beta' chain family. In terms of assembly, the RNAP catalytic core consists of 2 alpha, 1 beta, 1 beta' and 1 omega subunit. When a sigma factor is associated with the core the holoenzyme is formed, which can initiate transcription. Mg(2+) is required as a cofactor. It depends on Zn(2+) as a cofactor.

The enzyme catalyses RNA(n) + a ribonucleoside 5'-triphosphate = RNA(n+1) + diphosphate. DNA-dependent RNA polymerase catalyzes the transcription of DNA into RNA using the four ribonucleoside triphosphates as substrates. The polypeptide is DNA-directed RNA polymerase subunit beta' (Mycolicibacterium smegmatis (strain ATCC 700084 / mc(2)155) (Mycobacterium smegmatis)).